A 364-amino-acid chain; its full sequence is 3'(2'),5'-bisphosphate nucleotidase 1 (364 aa).

Residue Asp-54 is the Proton acceptor of the active site. Positions 77, 141, 143, and 144 each coordinate Mg(2+). Thr-146 (proton acceptor) is an active-site residue. Adenosine 3',5'-bisphosphate contacts are provided by Thr-146, His-243, Ser-272, Lys-275, Arg-289, and Asp-302. Residues His-243, Ser-272, Lys-275, Arg-289, and Asp-302 each coordinate AMP. Asp-302 provides a ligand contact to Mg(2+).

It belongs to the inositol monophosphatase superfamily. Mg(2+) serves as cofactor.

The enzyme catalyses 3'-phosphoadenylyl sulfate + H2O = adenosine 5'-phosphosulfate + phosphate. The catalysed reaction is adenosine 3',5'-bisphosphate + H2O = AMP + phosphate. It carries out the reaction adenosine 2',5'-bisphosphate + H2O = AMP + phosphate. In terms of biological role, phosphatase that converts adenosine 3'-phosphate 5'-phosphosulfate (PAPS) to adenosine 5'-phosphosulfate (APS) and 3'(2')-phosphoadenosine 5'-phosphate (PAP) to AMP. Regulates the flux of sulfur in the sulfur-activation pathway by converting PAPS to APS. Involved in salt tolerance. The sequence is that of 3'(2'),5'-bisphosphate nucleotidase 1 (HAL21) from Candida albicans (strain WO-1) (Yeast).